The sequence spans 482 residues: GTPase Obg (482 aa).

In terms of domain architecture, Obg spans 2 to 159 (PRFIDRVVVH…RELTLELKTV (158 aa)). One can recognise an OBG-type G domain in the interval 160 to 341 (ADVGLVGFPS…LIFALWDMVA (182 aa)). GTP-binding positions include 166–173 (GFPSAGKS), 191–195 (FTTLA), 212–215 (DVPG), 292–295 (NKID), and 322–324 (STV). Ser-173 and Thr-193 together coordinate Mg(2+). The OCT domain maps to 359 to 437 (PIPVDETAFS…IGDMTFDWEP (79 aa)). The tract at residues 450–482 (RGTDVRLEQTDRVGADERKAARKARRQSDDGEE) is disordered. Residues 452–468 (TDVRLEQTDRVGADERK) show a composition bias toward basic and acidic residues.

It belongs to the TRAFAC class OBG-HflX-like GTPase superfamily. OBG GTPase family. Monomer. Requires Mg(2+) as cofactor.

The protein localises to the cytoplasm. Its function is as follows. An essential GTPase which binds GTP, GDP and possibly (p)ppGpp with moderate affinity, with high nucleotide exchange rates and a fairly low GTP hydrolysis rate. Plays a role in control of the cell cycle, stress response, ribosome biogenesis and in those bacteria that undergo differentiation, in morphogenesis control. This is GTPase Obg from Mycolicibacterium gilvum (strain PYR-GCK) (Mycobacterium gilvum (strain PYR-GCK)).